Consider the following 726-residue polypeptide: NHL repeat-containing protein 2 (726 aa).

The Thioredoxin domain occupies 43-200; sequence QKVDGWEQDL…TSIALKYYKD (158 aa). 6 NHL repeats span residues 212–254, 265–307, 335–369, 409–439, 461–505, and 518–562; these read KLYK…VWKN, NPGR…IDLE, ISSP…IWAL, FAQP…VRTV, AFGD…VDPK, and TNNV…MDLE.

As to quaternary structure, monomer. As to expression, ubiquitous. Detected in heart, kidney, muscle, brain, lung, liver and in skin fibroblasts (at protein level).

The protein resides in the cytoplasm. It localises to the cytosol. Required for normal embryonic development. The chain is NHL repeat-containing protein 2 (NHLRC2) from Homo sapiens (Human).